We begin with the raw amino-acid sequence, 148 residues long: Isotocin-neurophysin IT 2 (148 aa).

The first 20 residues, 1–20, serve as a signal peptide directing secretion; the sequence is MSGSMSSVFSLLYLLSVCSA. C21 and C26 are disulfide-bonded. G29 bears the Glycine amide mark. Intrachain disulfides connect C42–C86, C45–C59, C53–C76, C60–C66, C93–C105, C99–C117, and C106–C111.

The protein belongs to the vasopressin/oxytocin family.

In terms of biological role, isotocin causes contraction of smooth muscles. This Catostomus commersonii (White sucker) protein is Isotocin-neurophysin IT 2.